The chain runs to 781 residues: Putative UPF0313 protein YPO0674/y3502/YP_2990 (781 aa).

The Radical SAM core domain occupies A368–A646. [4Fe-4S] cluster contacts are provided by C382, C386, and C389. Residues R681–H781 form a disordered region. Polar residues predominate over residues K696–N708. Positions T726–T750 are enriched in low complexity.

The protein belongs to the UPF0313 family. [4Fe-4S] cluster serves as cofactor.

This chain is Putative UPF0313 protein YPO0674/y3502/YP_2990, found in Yersinia pestis.